Consider the following 248-residue polypeptide: tRNA (guanine-N(1)-)-methyltransferase (248 aa).

S-adenosyl-L-methionine is bound by residues Gly113 and 133–138; that span reads IGDYVL.

The protein belongs to the RNA methyltransferase TrmD family. In terms of assembly, homodimer.

It localises to the cytoplasm. It catalyses the reaction guanosine(37) in tRNA + S-adenosyl-L-methionine = N(1)-methylguanosine(37) in tRNA + S-adenosyl-L-homocysteine + H(+). Specifically methylates guanosine-37 in various tRNAs. This Shewanella frigidimarina (strain NCIMB 400) protein is tRNA (guanine-N(1)-)-methyltransferase.